The following is an 84-amino-acid chain: uncharacterized protein (84 aa).

Belongs to the chlamydial CPn_0710/CT_666/TC_0037 family.

This is an uncharacterized protein from Chlamydia pneumoniae (Chlamydophila pneumoniae).